The sequence spans 396 residues: Sialyltransferase-like protein 2 (396 aa).

Topologically, residues 1 to 6 (MKRRHL) are cytoplasmic. The chain crosses the membrane as a helical; Signal-anchor for type II membrane protein span at residues 7-23 (PPVLVLLLLSILSLSFR). The Lumenal portion of the chain corresponds to 24–396 (RRLLVLQGPP…FTVPPVRLHR (373 aa)). 3 N-linked (GlcNAc...) asparagine glycosylation sites follow: Asn72, Asn260, and Asn304.

This sequence belongs to the glycosyltransferase 29 family.

It is found in the golgi apparatus membrane. In terms of biological role, does not possess sialyltransferase-like activity in vitro. This chain is Sialyltransferase-like protein 2, found in Oryza sativa subsp. indica (Rice).